A 116-amino-acid polypeptide reads, in one-letter code: Large ribosomal subunit protein bL17 (116 aa).

It belongs to the bacterial ribosomal protein bL17 family. As to quaternary structure, part of the 50S ribosomal subunit. Contacts protein L32.

The sequence is that of Large ribosomal subunit protein bL17 from Synechococcus elongatus (strain ATCC 33912 / PCC 7942 / FACHB-805) (Anacystis nidulans R2).